The sequence spans 261 residues: Small ribosomal subunit protein uS3 (261 aa).

The KH type-2 domain maps to 39–107; that stretch reads VREYLKRKLA…PVHVSIEEIR (69 aa). A disordered region spans residues 213-261; the sequence is QPVAEEPAADDRRPRRTPGRPDGDKPRTRTVKKVDGAADPAKRVRKAGA. Over residues 221-254 the composition is skewed to basic and acidic residues; it reads ADDRRPRRTPGRPDGDKPRTRTVKKVDGAADPAK.

Belongs to the universal ribosomal protein uS3 family. As to quaternary structure, part of the 30S ribosomal subunit. Forms a tight complex with proteins S10 and S14.

Binds the lower part of the 30S subunit head. Binds mRNA in the 70S ribosome, positioning it for translation. The polypeptide is Small ribosomal subunit protein uS3 (Dechloromonas aromatica (strain RCB)).